The primary structure comprises 206 residues: Probable GTP-binding protein EngB (206 aa).

An EngB-type G domain is found at Q23–Y197. Residues G31–S38, G58–L62, D76–G79, T143–D146, and F176–S178 each bind GTP. Mg(2+)-binding residues include S38 and T60.

Belongs to the TRAFAC class TrmE-Era-EngA-EngB-Septin-like GTPase superfamily. EngB GTPase family. It depends on Mg(2+) as a cofactor.

In terms of biological role, necessary for normal cell division and for the maintenance of normal septation. The protein is Probable GTP-binding protein EngB of Pseudoalteromonas atlantica (strain T6c / ATCC BAA-1087).